Here is a 487-residue protein sequence, read N- to C-terminus: Inosine-5'-monophosphate dehydrogenase (487 aa).

CBS domains are found at residues 93–149 (IVSD…NKTV) and 153–214 (MTPK…CKDE). NAD(+) contacts are provided by residues Asp248, 248–250 (DSS), and 298–300 (GIG). 2 residues coordinate K(+): Gly300 and Gly302. Ser303 contacts IMP. Cys305 lines the K(+) pocket. Residue Cys305 is the Thioimidate intermediate of the active site. IMP is bound by residues 338–340 (DGG), 361–362 (GS), and 385–389 (YRGMG). Arg401 functions as the Proton acceptor in the catalytic mechanism. An IMP-binding site is contributed by Glu415. Glu469, Ser470, and His471 together coordinate K(+).

Belongs to the IMPDH/GMPR family. As to quaternary structure, homotetramer. K(+) is required as a cofactor.

The catalysed reaction is IMP + NAD(+) + H2O = XMP + NADH + H(+). It functions in the pathway purine metabolism; XMP biosynthesis via de novo pathway; XMP from IMP: step 1/1. Mycophenolic acid (MPA) is a non-competitive inhibitor that prevents formation of the closed enzyme conformation by binding to the same site as the amobile flap. In contrast, mizoribine monophosphate (MZP) is a competitive inhibitor that induces the closed conformation. MPA is a potent inhibitor of mammalian IMPDHs but a poor inhibitor of the bacterial enzymes. MZP is a more potent inhibitor of bacterial IMPDH. Functionally, catalyzes the conversion of inosine 5'-phosphate (IMP) to xanthosine 5'-phosphate (XMP), the first committed and rate-limiting step in the de novo synthesis of guanine nucleotides, and therefore plays an important role in the regulation of cell growth. In Pasteurella multocida (strain Pm70), this protein is Inosine-5'-monophosphate dehydrogenase.